A 63-amino-acid polypeptide reads, in one-letter code: Overexpressed in colon carcinoma 1 protein homolog (63 aa).

Low complexity predominate over residues 1–12 (MGCGNSTAASAG). The interval 1–40 (MGCGNSTAASAGAGQGPAGAAKDVTEESITEDDKRRNYGG) is disordered.

Belongs to the OCC1 family.

The sequence is that of Overexpressed in colon carcinoma 1 protein homolog from Bos taurus (Bovine).